The chain runs to 127 residues: F420-non-reducing hydrogenase subunit G (127 aa).

This sequence belongs to the [NiFe]/[NiFeSe] hydrogenase small subunit family. In terms of assembly, the F420-non-reducing hydrogenase is composed of three subunits; MvhA, MvhD and MvhG. It forms a complex with the heterodisulfide reductase (hdr).

In terms of biological role, part of a complex that provides reducing equivalents for heterodisulfide reductase. This is F420-non-reducing hydrogenase subunit G (mvhG) from Methanothermus fervidus.